An 812-amino-acid polypeptide reads, in one-letter code: Valine--tRNA ligase (812 aa).

The short motif at 47–57 is the 'HIGH' region element; it reads PTISGQLHIGH. The 'KMSKS' region signature appears at 536–540; sequence KMSKS. Lys-539 contributes to the ATP binding site.

The protein belongs to the class-I aminoacyl-tRNA synthetase family. ValS type 2 subfamily. As to quaternary structure, monomer.

The protein resides in the cytoplasm. The enzyme catalyses tRNA(Val) + L-valine + ATP = L-valyl-tRNA(Val) + AMP + diphosphate. Its function is as follows. Catalyzes the attachment of valine to tRNA(Val). As ValRS can inadvertently accommodate and process structurally similar amino acids such as threonine, to avoid such errors, it has a 'posttransfer' editing activity that hydrolyzes mischarged Thr-tRNA(Val) in a tRNA-dependent manner. This chain is Valine--tRNA ligase, found in Ehrlichia ruminantium (strain Gardel).